The chain runs to 362 residues: Beta-ketoacyl-[acyl-carrier-protein] synthase III 2 (362 aa).

Active-site residues include C113 and H251. An ACP-binding region spans residues 252-256 (QANIR). N281 is a catalytic residue.

The protein belongs to the thiolase-like superfamily. FabH family. Homodimer.

The protein localises to the cytoplasm. It catalyses the reaction malonyl-[ACP] + acetyl-CoA + H(+) = 3-oxobutanoyl-[ACP] + CO2 + CoA. It functions in the pathway lipid metabolism; fatty acid biosynthesis. Its function is as follows. Catalyzes the condensation reaction of fatty acid synthesis by the addition to an acyl acceptor of two carbons from malonyl-ACP. Catalyzes the first condensation reaction which initiates fatty acid synthesis and may therefore play a role in governing the total rate of fatty acid production. Possesses both acetoacetyl-ACP synthase and acetyl transacylase activities. Its substrate specificity determines the biosynthesis of branched-chain and/or straight-chain of fatty acids. The sequence is that of Beta-ketoacyl-[acyl-carrier-protein] synthase III 2 from Vibrio cholerae serotype O1 (strain ATCC 39315 / El Tor Inaba N16961).